The sequence spans 352 residues: Glycerol-1-phosphate dehydrogenase [NAD(P)+] (352 aa).

NAD(+) contacts are provided by residues 98-102 and 120-123; these read GKAID and TAAS. Asp-125 contacts substrate. Position 129 (Ser-129) interacts with NAD(+). Asp-172 contributes to the substrate binding site. Zn(2+) is bound by residues Asp-172 and His-252. His-256 provides a ligand contact to substrate. His-268 lines the Zn(2+) pocket.

Belongs to the glycerol-1-phosphate dehydrogenase family. Zn(2+) serves as cofactor.

It is found in the cytoplasm. The enzyme catalyses sn-glycerol 1-phosphate + NAD(+) = dihydroxyacetone phosphate + NADH + H(+). It carries out the reaction sn-glycerol 1-phosphate + NADP(+) = dihydroxyacetone phosphate + NADPH + H(+). It functions in the pathway membrane lipid metabolism; glycerophospholipid metabolism. Functionally, catalyzes the NAD(P)H-dependent reduction of dihydroxyacetonephosphate (DHAP or glycerone phosphate) to glycerol 1-phosphate (G1P). The G1P thus generated is used as the glycerophosphate backbone of phospholipids in the cellular membranes of Archaea. The protein is Glycerol-1-phosphate dehydrogenase [NAD(P)+] of Haloarcula marismortui (strain ATCC 43049 / DSM 3752 / JCM 8966 / VKM B-1809) (Halobacterium marismortui).